A 506-amino-acid chain; its full sequence is UDP-glycosyltransferase eriJ (506 aa).

The protein belongs to the UDP-glycosyltransferase family.

It carries out the reaction 11-O-acetylcyathatriol + UDP-alpha-D-xylose = erinacine Q + UDP + H(+). The catalysed reaction is 11-O-acetylcyathatriol + UDP-alpha-D-glucose = erinacine Q2 + UDP + H(+). The protein operates within secondary metabolite biosynthesis. In terms of biological role, UDP-glycosyltransferase; part of the gene cluster that mediates the biosynthesis of erinacines, cyathane-xylosides that show unique biological activities, including leishmanicidal activity, stimulating activity for nerve growth-factor synthesis, and agonistic activity toward the kappa opioid receptor. Within the pathway, eriJ tranfers xylose from UDP-xylose onto C-14 of 11-O-acetyl-cyathatriol to form eracine Q, and, at a lower rate, glucose from UDP-D-glucose to produce eracine Q2. The first step of the erinacines biosynthesis pathway is catalyzed by the geranylgeranyl diphosphate (GGPP) synthase eriE via conversion of farnesyl pyrophosphate and isopentyl pyrophosphate into geranylgeranyl pyrophosphate (GGPP). GGPP is then substrate of the diterpene cyclase eriG for the production of cyatha-3,12-diene. The cytochrome P450 monooxygenase eriI then hydroxylates cyatha-3,12-diene at C-14 of the seven-membered ring to produce erinacol, which is further hydroxylated at C-15 by the cytochrome P450 monooxygenase eriC to yield cyathadiol. The cytochrome P450 monooxygenase eriA then catalyzes C-11 hydroxylation in the presence of the short chain dehydrogenase/reductase (SDR) eriH, which leads to the production of cyathatriol. The acetyltransferase eriL converts cyathatriol into 11-O-acetyl-cyathatriol. The SDR eriH catalyzes further oxidation of 11-O-acetyl-cyathatriol into 1-O-acetylcyathin A3. Finally, the glycosyl transferase eriJ tranfers xylose from UDP-xylose onto C-14 of 11-O-acetyl-cyathatriol to form eracine Q. EriJ is also able to convert 11-O-acetyl-cyathatriol to eracine Q2 by using UDP-D-glucose as cosubstrate, but at a lower rate. This Hericium erinaceus (Lion's mane mushroom) protein is UDP-glycosyltransferase eriJ.